We begin with the raw amino-acid sequence, 360 residues long: Photosystem II protein D1 (360 aa).

Transmembrane regions (helical) follow at residues 29–46 (YIGW…TAAS), 118–133 (HFLI…EWEL), and 142–156 (WIFV…AASA). His-118 contacts chlorophyll a. Residue Trp-126 participates in pheophytin a binding. Asp-170 and Glu-189 together coordinate [CaMn4O5] cluster. Residues 197-218 (FHMAGVAGVFGGSLFSAMHGSL) traverse the membrane as a helical segment. Position 198 (His-198) interacts with chlorophyll a. A quinone is bound by residues His-215 and 264 to 265 (SF). His-215 lines the Fe cation pocket. His-272 serves as a coordination point for Fe cation. The helical transmembrane segment at 274-288 (FLAAWPVVGIWLTAL) threads the bilayer. Positions 332, 333, 342, and 344 each coordinate [CaMn4O5] cluster. A propeptide spanning residues 345–360 (SNEILPVAISAPSVVG) is cleaved from the precursor.

The protein belongs to the reaction center PufL/M/PsbA/D family. As to quaternary structure, PSII is composed of 1 copy each of membrane proteins PsbA, PsbB, PsbC, PsbD, PsbE, PsbF, PsbH, PsbI, PsbJ, PsbK, PsbL, PsbM, PsbT, PsbX, PsbY, PsbZ, Psb30/Ycf12, at least 3 peripheral proteins of the oxygen-evolving complex and a large number of cofactors. It forms dimeric complexes. The cofactor is The D1/D2 heterodimer binds P680, chlorophylls that are the primary electron donor of PSII, and subsequent electron acceptors. It shares a non-heme iron and each subunit binds pheophytin, quinone, additional chlorophylls, carotenoids and lipids. D1 provides most of the ligands for the Mn4-Ca-O5 cluster of the oxygen-evolving complex (OEC). There is also a Cl(-1) ion associated with D1 and D2, which is required for oxygen evolution. The PSII complex binds additional chlorophylls, carotenoids and specific lipids.. Post-translationally, tyr-161 forms a radical intermediate that is referred to as redox-active TyrZ, YZ or Y-Z. In terms of processing, C-terminally processed by CTPA; processing is essential to allow assembly of the oxygen-evolving complex and thus photosynthetic growth.

It localises to the plastid. It is found in the chloroplast thylakoid membrane. The catalysed reaction is 2 a plastoquinone + 4 hnu + 2 H2O = 2 a plastoquinol + O2. In terms of biological role, photosystem II (PSII) is a light-driven water:plastoquinone oxidoreductase that uses light energy to abstract electrons from H(2)O, generating O(2) and a proton gradient subsequently used for ATP formation. It consists of a core antenna complex that captures photons, and an electron transfer chain that converts photonic excitation into a charge separation. The D1/D2 (PsbA/PsbD) reaction center heterodimer binds P680, the primary electron donor of PSII as well as several subsequent electron acceptors. The chain is Photosystem II protein D1 from Ectocarpus siliculosus (Brown alga).